A 240-amino-acid chain; its full sequence is MKILLIGYGAMNQRVARLAEEKGHEIVGVIENTPKATTPYQQYQHIADVKDADVAIDFSNPNLLFPLLDEEFHLPLVVATTGEKEKLLNKLDELSQNMPVFFSANMSYGVHALTKILAAAVPLLDDFDIELTEAHHNKKVDAPSGTLEKLYDVIVSLKENVTPVYDRHELNEKRQPQDIGIHSIRGGTIVGEHEVLFAGTDETIQITHRAQSKDIFANGAIQAAERLVNKPNGFYTFDNL.

NAD(+) contacts are provided by residues 79–81 (ATT) and 103–106 (SANM). H135 serves as the catalytic Proton donor/acceptor. Residue H136 coordinates (S)-2,3,4,5-tetrahydrodipicolinate. The active-site Proton donor is the K139. A (S)-2,3,4,5-tetrahydrodipicolinate-binding site is contributed by 145–146 (GT).

Belongs to the DapB family.

It localises to the cytoplasm. The enzyme catalyses (S)-2,3,4,5-tetrahydrodipicolinate + NAD(+) + H2O = (2S,4S)-4-hydroxy-2,3,4,5-tetrahydrodipicolinate + NADH + H(+). The catalysed reaction is (S)-2,3,4,5-tetrahydrodipicolinate + NADP(+) + H2O = (2S,4S)-4-hydroxy-2,3,4,5-tetrahydrodipicolinate + NADPH + H(+). It participates in amino-acid biosynthesis; L-lysine biosynthesis via DAP pathway; (S)-tetrahydrodipicolinate from L-aspartate: step 4/4. In terms of biological role, catalyzes the conversion of 4-hydroxy-tetrahydrodipicolinate (HTPA) to tetrahydrodipicolinate. This chain is 4-hydroxy-tetrahydrodipicolinate reductase, found in Staphylococcus aureus (strain Mu3 / ATCC 700698).